A 60-amino-acid polypeptide reads, in one-letter code: Large ribosomal subunit protein uL30 (60 aa).

The protein belongs to the universal ribosomal protein uL30 family. Part of the 50S ribosomal subunit.

In Cupriavidus necator (strain ATCC 17699 / DSM 428 / KCTC 22496 / NCIMB 10442 / H16 / Stanier 337) (Ralstonia eutropha), this protein is Large ribosomal subunit protein uL30.